The following is a 1406-amino-acid chain: Sterol 3-beta-glucosyltransferase (1406 aa).

The segment at 83–231 is disordered; that stretch reads ARFDESSDSD…IHSSHESSTS (149 aa). Positions 110–128 are enriched in polar residues; that stretch reads GSSNPVNSQTEQRSGSQTS. Over residues 209-231 the composition is skewed to low complexity; the sequence is SAGRSQNSSQESSIHSSHESSTS. One can recognise a GRAM 1 domain in the interval 236-286; the sequence is RLMEMFDFNKPEKVLVEYACSLLQSMLLQGYMYVTEGHICFYAYLPRKSTV. Positions 286-385 constitute a PH domain; the sequence is VAIKSGYLHK…WVKALQKVIF (100 aa). Disordered regions lie at residues 457–558 and 576–622; these read ASGH…AESA and LDKR…DGKP. Residues 468–478 are compositionally biased toward basic and acidic residues; that stretch reads HADRSPRSDRT. Polar residues-rich tracts occupy residues 490-499 and 531-548; these read GTSQPGNGSA and SESI…SAVW. Residues 576 to 587 show a composition bias toward basic and acidic residues; the sequence is LDKRACSDERSG. In terms of domain architecture, GRAM 2 spans 730-796; sequence DRFRAHFALP…KDVENVEKEK (67 aa). Ser917, Arg918, Asp920, Ala1220, His1222, His1235, Gly1239, Thr1240, Asp1259, and Gln1260 together coordinate UDP-alpha-D-glucose. Positions 1334–1406 are disordered; sequence QRSIASSTPF…LTNSIHGAGR (73 aa). Positions 1336–1349 are enriched in low complexity; the sequence is SIASSTPFSPTPSA. Acidic residues predominate over residues 1355–1375; the sequence is QGDDDVEDSEEWTFVGDDNEM. The span at 1376 to 1387 shows a compositional bias: basic and acidic residues; the sequence is DMSRRMRDRAIS. A compositionally biased stretch (polar residues) spans 1397 to 1406; the sequence is LTNSIHGAGR.

The protein belongs to the glycosyltransferase 28 family.

The protein resides in the cytoplasm. It is found in the preautophagosomal structure membrane. It catalyses the reaction a sterol + UDP-alpha-D-glucose = a sterol 3-beta-D-glucoside + UDP + H(+). The catalysed reaction is ergosterol + UDP-alpha-D-glucose = ergosteryl 3-beta-D-glucoside + UDP + H(+). Its function is as follows. Sterol glycosyltransferase responsible for the glycosylation of ergosterol to form ergosterol-glucoside. This Aspergillus clavatus (strain ATCC 1007 / CBS 513.65 / DSM 816 / NCTC 3887 / NRRL 1 / QM 1276 / 107) protein is Sterol 3-beta-glucosyltransferase.